A 389-amino-acid polypeptide reads, in one-letter code: Type II methyltransferase M2.BsuMI (389 aa).

In terms of domain architecture, SAM-dependent MTase C5-type spans 1-299 (MKVVSLFSGI…ENLSQPKGSI (299 aa)). Cys69 is an active-site residue.

This sequence belongs to the class I-like SAM-binding methyltransferase superfamily. C5-methyltransferase family. Monomer. May form a complex with YdiP, also seems to be active alone.

It carries out the reaction a 2'-deoxycytidine in DNA + S-adenosyl-L-methionine = a 5-methyl-2'-deoxycytidine in DNA + S-adenosyl-L-homocysteine + H(+). With respect to regulation, somewhat inhibited by MgCl(2) and spermidine, strongly inhibited by MnCl(2). Functionally, a methylase, recognizes the double-stranded sequence 5'-YTCGAR-3', methylates C-3 on both strands, and protects the DNA from cleavage by the BsuMI endonuclease. This chain is Type II methyltransferase M2.BsuMI (ydiP), found in Bacillus subtilis (strain 168).